We begin with the raw amino-acid sequence, 205 residues long: MAEASSVNVGSGCAEKGPEELSQEPARPGTNISRVKLFDTMVDTFLQKLVAAGSFQRFTDCYKRFYQLQPEMTQRIYDKFVTQLQTSIQEEISEIKAEGNLEAVLIALDAIVEESKDRKEQAWRPSGIPEKDLRSAMAPYLLQQRDALQRRVQRQEAENRQLADAVLAGRRQLEELQLQAQARQQAWQALHREQKELLAVLKEPE.

A disordered region spans residues 1-28; it reads MAEASSVNVGSGCAEKGPEELSQEPARP. The stretch at 140-190 forms a coiled coil; sequence YLLQQRDALQRRVQRQEAENRQLADAVLAGRRQLEELQLQAQARQQAWQAL.

Component of the MIS12 complex composed of MIS12, DSN1, NSL1 and PMF1. Interacts with COPS7A. Interacts via its coiled-coil domain with the leucine-zipper domain of NFE2L2. The interaction with NFE2L2 is required for the transcriptional regulation of SSAT.

Its subcellular location is the nucleus. The protein localises to the chromosome. It is found in the centromere. The protein resides in the kinetochore. Functionally, part of the MIS12 complex which is required for normal chromosome alignment and segregation and kinetochore formation during mitosis. May act as a cotranscription partner of NFE2L2 involved in regulation of polyamine-induced transcription of SSAT. The sequence is that of Polyamine-modulated factor 1 (PMF1) from Bos taurus (Bovine).